Here is a 144-residue protein sequence, read N- to C-terminus: Methylglyoxal synthase (144 aa).

The region spanning 1-144 is the MGS-like domain; the sequence is MNIALIAHDE…EEEQRKFLTD (144 aa). Residues histidine 8, lysine 12, 34-37, and 54-55 each bind substrate; these read TGTT and SG. Aspartate 60 (proton donor/acceptor) is an active-site residue. Histidine 87 lines the substrate pocket.

Belongs to the methylglyoxal synthase family.

The enzyme catalyses dihydroxyacetone phosphate = methylglyoxal + phosphate. Its function is as follows. Catalyzes the formation of methylglyoxal from dihydroxyacetone phosphate. This is Methylglyoxal synthase from Exiguobacterium sibiricum (strain DSM 17290 / CCUG 55495 / CIP 109462 / JCM 13490 / 255-15).